The primary structure comprises 77 residues: Large ribosomal subunit protein bL28 (77 aa).

It belongs to the bacterial ribosomal protein bL28 family.

The sequence is that of Large ribosomal subunit protein bL28 from Karelsulcia muelleri (strain GWSS) (Sulcia muelleri).